Reading from the N-terminus, the 594-residue chain is Invasin CotH2 (594 aa).

The signal sequence occupies residues 1–19 (MKLSLTIVSSSFLVAIAHA). N-linked (GlcNAc...) asparagine glycosylation is found at N77, N162, N226, N316, N441, N519, and N533. Residues 529 to 565 (PPAANGTATSTNDGGNTHTAAGESKPASSSESSGSKI) form a disordered region. Residues 534–547 (GTATSTNDGGNTHT) show a composition bias toward polar residues. Residues 548-565 (AAGESKPASSSESSGSKI) show a composition bias toward low complexity. S571 is lipidated: GPI-anchor amidated serine. A propeptide spans 572 to 594 (GASRSAVSTVLLGVTALVATAIF) (removed in mature form).

Interacts with host epithelial cell surface HSPA5/BiP protein.

It localises to the cell membrane. Its function is as follows. Promotes invasion of host epithelial cells by adhering to receptors on the host cell surface to facilitate endocytosis of the pathogen into host cells. Binds HSPA5/BiP protein on the cell surface of host epithelial cells. This Rhizopus delemar (strain RA 99-880 / ATCC MYA-4621 / FGSC 9543 / NRRL 43880) (Mucormycosis agent) protein is Invasin CotH2.